The sequence spans 265 residues: 3-deoxy-manno-octulosonate cytidylyltransferase 2 (265 aa).

Belongs to the KdsB family.

The protein resides in the cytoplasm. It catalyses the reaction 3-deoxy-alpha-D-manno-oct-2-ulosonate + CTP = CMP-3-deoxy-beta-D-manno-octulosonate + diphosphate. Its pathway is nucleotide-sugar biosynthesis; CMP-3-deoxy-D-manno-octulosonate biosynthesis; CMP-3-deoxy-D-manno-octulosonate from 3-deoxy-D-manno-octulosonate and CTP: step 1/1. The protein operates within bacterial outer membrane biogenesis; lipopolysaccharide biosynthesis. Its function is as follows. Activates KDO (a required 8-carbon sugar) for incorporation into bacterial lipopolysaccharide in Gram-negative bacteria. The chain is 3-deoxy-manno-octulosonate cytidylyltransferase 2 from Burkholderia lata (strain ATCC 17760 / DSM 23089 / LMG 22485 / NCIMB 9086 / R18194 / 383).